Consider the following 715-residue polypeptide: Palmitoyltransferase ZDHHC5 (715 aa).

Residues 1–13 (MPAESGKRFKPSK) are Cytoplasmic-facing. The helical transmembrane segment at 14 to 34 (YVPVSAAAIFLVGATTLFFAF) threads the bilayer. The Extracellular segment spans residues 35-38 (TCPG). Residues 39–59 (LSLYVSPAVPIYNAIMFLFVL) form a helical membrane-spanning segment. The Cytoplasmic segment spans residues 60–148 (ANFSMATFMD…NCIGRRNYRY (89 aa)). The residue at position 91 (Y91) is a Phosphotyrosine. In terms of domain architecture, DHHC spans 104–154 (KWCATCRFYRPPRCSHCSVCDNCVEEFDHHCPWVNNCIGRRNYRYFFLFLL). The active-site S-palmitoyl cysteine intermediate is the C134. A helical membrane pass occupies residues 149–169 (FFLFLLSLTAHIMGVFGFGLL). At 170–191 (YVLYHIEELSGVRTAVTMAVMC) the chain is on the extracellular side. Residues 192-212 (VAGLFFIPVAGLTGFHVVLVA) form a helical membrane-spanning segment. The Cytoplasmic segment spans residues 213–715 (RGRTTNEQVT…VGGTTYEISV (503 aa)). At S247 the chain carries Phosphoserine. The segment at 289–715 (GELRRTKSKG…VGGTTYEISV (427 aa)) is disordered. T294 is modified (phosphothreonine). Phosphoserine is present on residues S296 and S299. At T303 the chain carries Phosphothreonine. S345 is modified (phosphoserine). Phosphothreonine is present on residues T348 and T350. Over residues 359–373 (SSSSTSAAMPHSSSA) the composition is skewed to low complexity. A phosphoserine mark is found at S380, S398, S406, and S409. T411 is subject to Phosphothreonine. S415, S425, S429, and S432 each carry phosphoserine. Low complexity predominate over residues 422–432 (SSGSRSSSLKS). Residue T436 is modified to Phosphothreonine. A compositionally biased stretch (polar residues) spans 442 to 478 (QLQSIRSEGTTSTSYKSLANQTRNGSLSYDSLLTPSD). Phosphoserine occurs at positions 529 and 554. An Omega-N-methylarginine modification is found at R617. Position 621 is a phosphoserine (S621). At T659 the chain carries Phosphothreonine. A compositionally biased stretch (polar residues) spans 666–677 (LKTTYSKSNGQP). 2 positions are modified to phosphoserine: S684 and S694. At R697 the chain carries Omega-N-methylarginine.

It belongs to the DHHC palmitoyltransferase family. ERF2/ZDHHC9 subfamily.

The protein resides in the cell membrane. The catalysed reaction is L-cysteinyl-[protein] + hexadecanoyl-CoA = S-hexadecanoyl-L-cysteinyl-[protein] + CoA. Functionally, palmitoyltransferase that catalyzes the addition of palmitate onto various protein substrates such as CTNND2, CD36, GSDMD, NLRP3, NOD1, NOD2, STAT3 and S1PR1 thus plays a role in various biological processes including cell adhesion, inflammation, fatty acid uptake, bacterial sensing or cardiac functions. Plays an important role in the regulation of synapse efficacy by mediating palmitoylation of delta-catenin/CTNND2, thereby increasing synaptic delivery and surface stabilization of alpha-amino-3-hydroxy-5-methyl-4-isoxazole propionic acid receptors (AMPARs). Under basal conditions, remains at the synaptic membrane through FYN-mediated phosphorylation that prevents association with endocytic proteins. Neuronal activity enhances the internalization and trafficking of DHHC5 from spines to dendritic shafts where it palmitoylates delta-catenin/CTNND2. Regulates cell adhesion at the plasma membrane by palmitoylating GOLGA7B and DSG2. Plays a role in innate immune response by mediating the palmitoylation of NOD1 and NOD2 and their proper recruitment to the bacterial entry site and phagosomes. Also participates in fatty acid uptake by palmitoylating CD36 and thereby targeting it to the plasma membrane. Upon binding of fatty acids to CD36, gets phosphorylated by LYN leading to inactivation and subsequent CD36 caveolar endocytosis. Controls oligodendrocyte development by catalyzing STAT3 palmitoylation. Acts as a regulator of inflammatory response by mediating palmitoylation of NLRP3 and GSDMD. Palmitoylates NLRP3 to promote inflammasome assembly and activation. Activates pyroptosis by catalyzing palmitoylation of gasdermin-D (GSDMD), thereby promoting membrane translocation and pore formation of GSDMD. The polypeptide is Palmitoyltransferase ZDHHC5 (ZDHHC5) (Pan troglodytes (Chimpanzee)).